The sequence spans 86 residues: Small ribosomal subunit protein bS18 (86 aa).

Residues 1 to 20 form a disordered region; it reads MSREEGNNGRRPGGKMRRSR.

The protein belongs to the bacterial ribosomal protein bS18 family. Part of the 30S ribosomal subunit. Forms a tight heterodimer with protein bS6.

Binds as a heterodimer with protein bS6 to the central domain of the 16S rRNA, where it helps stabilize the platform of the 30S subunit. This Clostridium beijerinckii (strain ATCC 51743 / NCIMB 8052) (Clostridium acetobutylicum) protein is Small ribosomal subunit protein bS18.